The sequence spans 337 residues: GDP-mannose transporter 1 (337 aa).

Topologically, residues 1-16 are cytoplasmic; the sequence is MSELKTGHAGHNPWAS. The chain crosses the membrane as a helical span at residues 17 to 37; sequence VANSGPISILSYCGSSILMTV. Over 38 to 51 the chain is Lumenal; it reads TNKFVVNLKDFNMN. A helical membrane pass occupies residues 52–72; it reads FVMLFVQSLVCTITLIILRIL. The Cytoplasmic segment spans residues 73 to 92; it reads GYAKFRSLNKTDAKNWFPIS. The chain crosses the membrane as a helical span at residues 93–113; sequence FLLVLMIYTSSKALQYLAVPI. At 114–119 the chain is on the lumenal side; the sequence is YTIFKN. Asparagine 119 is a glycosylation site (N-linked (GlcNAc...) asparagine). A helical membrane pass occupies residues 120–140; it reads LTIILIAYGEVLFFGGSVTSM. Residues 141–144 are Cytoplasmic-facing; sequence ELSS. Residues 145-165 traverse the membrane as a helical segment; the sequence is FLLMVLSSVVATWGDQQAVAA. Residues 166–180 are Lumenal-facing; the sequence is KAASLAEGAAGAVAS. Residues 181–201 form a helical membrane-spanning segment; sequence FNPGYFWMFTNCITSALFVLI. Over 202-215 the chain is Cytoplasmic; that stretch reads MRKRIKLTNFKDFD. The chain crosses the membrane as a helical span at residues 216–236; the sequence is TMFYNNVLALPILLLFSFCVE. Residues 237–252 are Lumenal-facing; that stretch reads DWSSVNLTNNFSNDSL. N-linked (GlcNAc...) asparagine glycosylation is found at asparagine 242, asparagine 246, and asparagine 249. A helical membrane pass occupies residues 253 to 273; the sequence is TAMIISGVASVGISYCSGWCV. The Cytoplasmic portion of the chain corresponds to 274–279; it reads RVTSST. The helical transmembrane segment at 280–300 threads the bilayer; that stretch reads TYSMVGALNKLPIALSGLIFF. Residues 301-304 are Lumenal-facing; it reads DAPR. The chain crosses the membrane as a helical span at residues 305-325; the sequence is NFLSILSIFIGFLSGIIYAVA. The Cytoplasmic portion of the chain corresponds to 326 to 337; it reads KQKKQQAQPLRK.

Belongs to the TPT transporter family. SLC35D subfamily. As to quaternary structure, homooligomer.

It is found in the golgi apparatus membrane. The protein resides in the cytoplasmic vesicle membrane. Its subcellular location is the endoplasmic reticulum membrane. Its function is as follows. Involved in the import of GDP-mannose from the cytoplasm into the Golgi lumen. Defective copy causes severe glycosylation defect and abnormal retention of soluble endoplasmic reticulum proteins. Involved in vanadate sensitivity. The protein is GDP-mannose transporter 1 (VRG4) of Saccharomyces cerevisiae (strain YJM789) (Baker's yeast).